The chain runs to 411 residues: Serpin A3-1 (411 aa).

Residues methionine 1–cysteine 24 form the signal peptide. Residues asparagine 100, asparagine 180, asparagine 230, and asparagine 264 are each glycosylated (N-linked (GlcNAc...) asparagine).

The protein belongs to the serpin family. As to quaternary structure, homodimer. Post-translationally, N-glycosylated. In terms of tissue distribution, detected in all tissues examined (at protein level). Abundantly expressed in liver, kidney and spleen. Lowest levels were observed in diaphragm muscle.

The protein resides in the cytoplasmic vesicle. The protein localises to the secretory vesicle. It localises to the chromaffin granule. It is found in the secreted. Its function is as follows. Potent inhibitor of the serine proteases elastase and trypsin. Moderately inhibits the serine proteases plasmin and chymotrypsin, and the thiol protease proenkephalin-processing enzyme. Does not inhibit the serine proteases cathepsin G, furin, kallikrein, thrombin, tissue plasminogen activator and urokinase, or the cysteine proteases cathepsin B, cathepsin L and papain. The sequence is that of Serpin A3-1 from Bos taurus (Bovine).